Consider the following 192-residue polypeptide: Beta-glucosidase (192 aa).

This sequence belongs to the glycosyl hydrolase 3 family.

It catalyses the reaction Hydrolysis of terminal, non-reducing beta-D-glucosyl residues with release of beta-D-glucose.. Its pathway is glycan metabolism; cellulose degradation. The protein is Beta-glucosidase of Schizophyllum commune (Split gill fungus).